We begin with the raw amino-acid sequence, 612 residues long: uncharacterized protein (612 aa).

Positions 39-100 (ERDHNLWEIE…KNISVKDLDE (62 aa)) form a coiled coil. A disordered region spans residues 219–241 (PLSSGESLPKKEEEVTKSPSFTL). WD repeat units follow at residues 286–325 (TSTQ…NDNS), 337–376 (GHEG…TSDS), 389–432 (GHED…FKIR), 434–470 (DSKQ…LVSQ), 483–523 (AVKD…LLAE), 526–565 (ISKV…STLE), and 574–612 (EEIT…KYLP).

It localises to the cytoplasm. This is an uncharacterized protein from Schizosaccharomyces pombe (strain 972 / ATCC 24843) (Fission yeast).